A 294-amino-acid polypeptide reads, in one-letter code: Diaminopimelate epimerase (294 aa).

Residues N13, Q46, and N69 each contribute to the substrate site. The Proton donor role is filled by C78. Substrate contacts are provided by residues 79–80 (GN), N173, N206, and 224–225 (ER). C233 functions as the Proton acceptor in the catalytic mechanism. 234–235 (GT) provides a ligand contact to substrate.

This sequence belongs to the diaminopimelate epimerase family. As to quaternary structure, homodimer.

It localises to the cytoplasm. The catalysed reaction is (2S,6S)-2,6-diaminopimelate = meso-2,6-diaminopimelate. It functions in the pathway amino-acid biosynthesis; L-lysine biosynthesis via DAP pathway; DL-2,6-diaminopimelate from LL-2,6-diaminopimelate: step 1/1. Catalyzes the stereoinversion of LL-2,6-diaminopimelate (L,L-DAP) to meso-diaminopimelate (meso-DAP), a precursor of L-lysine and an essential component of the bacterial peptidoglycan. The polypeptide is Diaminopimelate epimerase (Variovorax paradoxus (strain S110)).